The sequence spans 227 residues: ATP synthase F(0) complex subunit a (227 aa).

6 helical membrane-spanning segments follow: residues 13–33 (YLLG…LFPA), 69–89 (WALL…LGLL), 98–118 (QLSL…IIGM), 132–152 (EGTP…SLFI), 179–199 (VFVL…VLFL), and 202–222 (LLEV…LSLY).

The protein belongs to the ATPase A chain family. Component of the ATP synthase complex composed at least of ATP5F1A/subunit alpha, ATP5F1B/subunit beta, ATP5MC1/subunit c (homooctomer), MT-ATP6/subunit a, MT-ATP8/subunit 8, ATP5ME/subunit e, ATP5MF/subunit f, ATP5MG/subunit g, ATP5MK/subunit k, ATP5MJ/subunit j, ATP5F1C/subunit gamma, ATP5F1D/subunit delta, ATP5F1E/subunit epsilon, ATP5PF/subunit F6, ATP5PB/subunit b, ATP5PD/subunit d, ATP5PO/subunit OSCP. ATP synthase complex consists of a soluble F(1) head domain (subunits alpha(3) and beta(3)) - the catalytic core - and a membrane F(0) domain - the membrane proton channel (subunits c, a, 8, e, f, g, k and j). These two domains are linked by a central stalk (subunits gamma, delta, and epsilon) rotating inside the F1 region and a stationary peripheral stalk (subunits F6, b, d, and OSCP). Interacts with DNAJC30; interaction is direct.

The protein localises to the mitochondrion inner membrane. The enzyme catalyses H(+)(in) = H(+)(out). Subunit a, of the mitochondrial membrane ATP synthase complex (F(1)F(0) ATP synthase or Complex V) that produces ATP from ADP in the presence of a proton gradient across the membrane which is generated by electron transport complexes of the respiratory chain. ATP synthase complex consist of a soluble F(1) head domain - the catalytic core - and a membrane F(1) domain - the membrane proton channel. These two domains are linked by a central stalk rotating inside the F(1) region and a stationary peripheral stalk. During catalysis, ATP synthesis in the catalytic domain of F(1) is coupled via a rotary mechanism of the central stalk subunits to proton translocation. With the subunit c (ATP5MC1), forms the proton-conducting channel in the F(0) domain, that contains two crucial half-channels (inlet and outlet) that facilitate proton movement from the mitochondrial intermembrane space (IMS) into the matrix. Protons are taken up via the inlet half-channel and released through the outlet half-channel, following a Grotthuss mechanism. This chain is ATP synthase F(0) complex subunit a, found in Danio rerio (Zebrafish).